Reading from the N-terminus, the 128-residue chain is Phycoerythrin alpha-3 chain, chloroplastic (128 aa).

Residues 1-52 (MFAKTLASLAVIGSAAAYVPMMSMDMGRREVVQAGAAAAAVTPFLSGAPAGA) constitute a chloroplast transit peptide. A 5-hydroxylysine modification is found at lysine 56. A disordered region spans residues 70 to 89 (GCSRAPKESTGGKAGGQDDE). 15,16-dihydrobiliverdin contacts are provided by residues cysteine 71, arginine 73, 77-78 (ES), and lysine 93.

Belongs to the phycoerythrin family. In terms of assembly, heterotetramer of 2 different alpha chains and 2 identical beta chains. The subunit composition could comprise of any combination of 2 out of 4 different alpha units with an invariant beta unit. Contains one covalently linked 15,16-dihydrobiliverdin chromophore.

The protein resides in the plastid. The protein localises to the chloroplast thylakoid membrane. Light-harvesting photosynthetic tetrapyrrole chromophore-protein from the phycobiliprotein complex. The sequence is that of Phycoerythrin alpha-3 chain, chloroplastic (cpeA3) from Rhodomonas sp. (strain CS 24) (Chroomonas sp. (strain CS24)).